We begin with the raw amino-acid sequence, 602 residues long: MALSCSTVRPRRRGSALRSKMELLSRAEQEMSLAALKQHDPYITSIADLTGQVALYTFCPKANQWEKTDIEGTLFVYRRSASPYHGFTIVNRLNMHNLVEPVNKDLEFQLHEPFLLYRNASLSIYSIWFYDKNDCHRIAKLMADVVEEETRRSQQAARDKQSPSQANGCSDQRPIDILEMLSRAKDEYERNQMGGSNISSPGLQPSTQLSNLGSTETLEETPSGSQDKSAPSGHKHLTVEELFGTSLPKEQPTAMGLESEDTDKLLGDASQKEPSSFLPFPFEQSGGAPQSENLGIHSAAHHTVQPEVSTPVLITPASIAQSGDKHPPSYTLPLSPVLSPTLPAEAPTTQVPHLPRNSTMIQAVKTTPRQKSPLLNQPVPELSHSSLVASQSPFRAPVSLANPAGTALPSVDLLQKLRLTPQHDQIQAQPLGKGTMAPSFSSAAGQLATPESFIEPSSKTAAARAAVSASLSNMVLAPTLQSMQQNQDPEVFSQPKVLPSAIPIAGSPLVPATTTAVSSVLLSPSVFQQTVPRAADLERKASSPSPLTVGTAESQRKPSIILSKSQLQDTLIHLIKNDSSFLSTLHAVYLQVLTKNKDNHNL.

S82 bears the Phosphoserine mark. Residues 152-161 (RSQQAARDKQ) are compositionally biased toward basic and acidic residues. Disordered regions lie at residues 152–174 (RSQQ…DQRP), 191–234 (NQMG…PSGH), and 267–291 (GDAS…APQS). S162, S199, and S200 each carry phosphoserine. Over residues 193–229 (MGGSNISSPGLQPSTQLSNLGSTETLEETPSGSQDKS) the composition is skewed to polar residues. S335 and S339 each carry phosphoserine. Residue T367 is modified to Phosphothreonine. S372 carries the phosphoserine modification. Position 395 is an asymmetric dimethylarginine (R395). Position 420 is a phosphothreonine (T420). S441, S542, S543, and S545 each carry phosphoserine. A phosphothreonine mark is found at T548 and T551.

This sequence belongs to the DCP1 family. As to quaternary structure, forms a complex with EDC3, DCP2, DDX6 and EDC4/HEDLS, within this complex directly interacts with EDC3. Part of a cytoplasmic complex containing proteins involved in mRNA decay, including XRN1 and LSM1. Interacts with DCP1B. Interacts with DCP2. Interacts with DDX17 in an RNA-independent manner. Interacts with PNRC2. Interacts with SMAD4. Interacts with UPF1. Interacts with ZC3HAV1. Interacts with ZFP36L1. Interacts with NBDY. Interacts with DHX34; the interaction is RNA-independent. In terms of tissue distribution, ubiquitous, with highest expression in the spleen and testis (at protein level).

It is found in the cytoplasm. The protein localises to the P-body. It localises to the nucleus. The enzyme catalyses a 5'-end (N(7)-methyl 5'-triphosphoguanosine)-ribonucleoside in mRNA + H2O = N(7)-methyl-GDP + a 5'-end phospho-ribonucleoside in mRNA + 2 H(+). Functionally, necessary for the degradation of mRNAs, both in normal mRNA turnover and in nonsense-mediated mRNA decay. Removes the 7-methyl guanine cap structure from mRNA molecules, yielding a 5'-phosphorylated mRNA fragment and 7m-GDP. Contributes to the transactivation of target genes after stimulation by TGFB1. Essential for embryonic development. This Mus musculus (Mouse) protein is mRNA-decapping enzyme 1A (Dcp1a).